The sequence spans 602 residues: Auxin response factor 18 (602 aa).

Residues 128-230 (FVKILTASDT…DLRVGVRRLA (103 aa)) constitute a DNA-binding region (TF-B3). The disordered stretch occupies residues 359–396 (TSPISTPAQQPQSKCKRSRPIEPSVKTPAPPSFLYSLP). Over residues 360–371 (SPISTPAQQPQS) the composition is skewed to polar residues. The region spanning 489-581 (RSRTKVQMQG…EVKKMTTKLK (93 aa)) is the PB1 domain.

It belongs to the ARF family. Homodimers and heterodimers.

The protein resides in the nucleus. Auxin response factors (ARFs) are transcriptional factors that bind specifically to the DNA sequence 5'-TGTCTC-3' found in the auxin-responsive promoter elements (AuxREs). Could act as transcriptional activator or repressor. Formation of heterodimers with Aux/IAA proteins may alter their ability to modulate early auxin response genes expression. The chain is Auxin response factor 18 (ARF18) from Arabidopsis thaliana (Mouse-ear cress).